We begin with the raw amino-acid sequence, 186 residues long: Cell division protein ZapC (186 aa).

Belongs to the ZapC family. As to quaternary structure, interacts directly with FtsZ.

The protein localises to the cytoplasm. Functionally, contributes to the efficiency of the cell division process by stabilizing the polymeric form of the cell division protein FtsZ. Acts by promoting interactions between FtsZ protofilaments and suppressing the GTPase activity of FtsZ. The sequence is that of Cell division protein ZapC from Musicola paradisiaca (strain Ech703) (Dickeya paradisiaca).